The sequence spans 98 residues: Small ribosomal subunit protein bS20 (98 aa).

It belongs to the bacterial ribosomal protein bS20 family.

In terms of biological role, binds directly to 16S ribosomal RNA. The polypeptide is Small ribosomal subunit protein bS20 (Synechococcus elongatus (strain ATCC 33912 / PCC 7942 / FACHB-805) (Anacystis nidulans R2)).